A 131-amino-acid chain; its full sequence is MRHRHGLRKLNRTSSHRLAMLRNMSNSLFQHELIKTTLPKAKELRKVVEPLITLAKKDTVANRRLAFARLRDRDMVTKLFTELGPRYNARPGGYTRILKFGFRQGDNAPMALVELVDRPEITEAPAEEAAE.

The protein belongs to the bacterial ribosomal protein bL17 family. Part of the 50S ribosomal subunit. Contacts protein L32.

This chain is Large ribosomal subunit protein bL17, found in Cupriavidus pinatubonensis (strain JMP 134 / LMG 1197) (Cupriavidus necator (strain JMP 134)).